The sequence spans 111 residues: Antitoxin PrlF (111 aa).

The SpoVT-AbrB domain occupies 12–59 (TTESKVTIRGQTTIPAPVREALKLKPGLDSIHYEILPGGQVFMCRLGD).

Homodimer; forms a complex with YhaV with stoichiometry PrlF(2)-YhaV(4), possibly as a YhaV(2)-PrlF(2)-YhaV(2) complex like the MazFE complex.

Its subcellular location is the cytoplasm. In terms of biological role, antitoxin component of a type II toxin-antitoxin (TA) system. Labile antitoxin that binds to the YhaV toxin and neutralizes its ribonuclease activity. Also acts as a transcription factor. The YhaV/PrlF complex binds the prlF-yhaV operon, probably negatively regulating its expression. This chain is Antitoxin PrlF (prlF), found in Escherichia coli O6:H1 (strain CFT073 / ATCC 700928 / UPEC).